Reading from the N-terminus, the 557-residue chain is Dihydroxy-acid dehydratase (557 aa).

Residue Asp78 coordinates Mg(2+). Cys119 serves as a coordination point for [2Fe-2S] cluster. Residues Asp120 and Lys121 each contribute to the Mg(2+) site. Lys121 bears the N6-carboxylysine mark. Cys194 contacts [2Fe-2S] cluster. Glu446 is a Mg(2+) binding site. Ser472 acts as the Proton acceptor in catalysis.

Belongs to the IlvD/Edd family. In terms of assembly, homodimer. It depends on [2Fe-2S] cluster as a cofactor. Requires Mg(2+) as cofactor.

It catalyses the reaction (2R)-2,3-dihydroxy-3-methylbutanoate = 3-methyl-2-oxobutanoate + H2O. The catalysed reaction is (2R,3R)-2,3-dihydroxy-3-methylpentanoate = (S)-3-methyl-2-oxopentanoate + H2O. It functions in the pathway amino-acid biosynthesis; L-isoleucine biosynthesis; L-isoleucine from 2-oxobutanoate: step 3/4. The protein operates within amino-acid biosynthesis; L-valine biosynthesis; L-valine from pyruvate: step 3/4. In terms of biological role, functions in the biosynthesis of branched-chain amino acids. Catalyzes the dehydration of (2R,3R)-2,3-dihydroxy-3-methylpentanoate (2,3-dihydroxy-3-methylvalerate) into 2-oxo-3-methylpentanoate (2-oxo-3-methylvalerate) and of (2R)-2,3-dihydroxy-3-methylbutanoate (2,3-dihydroxyisovalerate) into 2-oxo-3-methylbutanoate (2-oxoisovalerate), the penultimate precursor to L-isoleucine and L-valine, respectively. This chain is Dihydroxy-acid dehydratase, found in Desulfosudis oleivorans (strain DSM 6200 / JCM 39069 / Hxd3) (Desulfococcus oleovorans).